A 180-amino-acid chain; its full sequence is Crossover junction endodeoxyribonuclease RuvC (180 aa).

Residues D7, E66, and D138 contribute to the active site. Positions 7, 66, and 138 each coordinate Mg(2+).

Belongs to the RuvC family. In terms of assembly, homodimer which binds Holliday junction (HJ) DNA. The HJ becomes 2-fold symmetrical on binding to RuvC with unstacked arms; it has a different conformation from HJ DNA in complex with RuvA. In the full resolvosome a probable DNA-RuvA(4)-RuvB(12)-RuvC(2) complex forms which resolves the HJ. Mg(2+) is required as a cofactor.

It localises to the cytoplasm. It catalyses the reaction Endonucleolytic cleavage at a junction such as a reciprocal single-stranded crossover between two homologous DNA duplexes (Holliday junction).. Functionally, the RuvA-RuvB-RuvC complex processes Holliday junction (HJ) DNA during genetic recombination and DNA repair. Endonuclease that resolves HJ intermediates. Cleaves cruciform DNA by making single-stranded nicks across the HJ at symmetrical positions within the homologous arms, yielding a 5'-phosphate and a 3'-hydroxyl group; requires a central core of homology in the junction. The consensus cleavage sequence is 5'-(A/T)TT(C/G)-3'. Cleavage occurs on the 3'-side of the TT dinucleotide at the point of strand exchange. HJ branch migration catalyzed by RuvA-RuvB allows RuvC to scan DNA until it finds its consensus sequence, where it cleaves and resolves the cruciform DNA. This is Crossover junction endodeoxyribonuclease RuvC from Burkholderia multivorans (strain ATCC 17616 / 249).